A 308-amino-acid chain; its full sequence is Methionyl-tRNA formyltransferase (308 aa).

Position 109–112 (109–112 (SLLP)) interacts with (6S)-5,6,7,8-tetrahydrofolate.

It belongs to the Fmt family.

It carries out the reaction L-methionyl-tRNA(fMet) + (6R)-10-formyltetrahydrofolate = N-formyl-L-methionyl-tRNA(fMet) + (6S)-5,6,7,8-tetrahydrofolate + H(+). Attaches a formyl group to the free amino group of methionyl-tRNA(fMet). The formyl group appears to play a dual role in the initiator identity of N-formylmethionyl-tRNA by promoting its recognition by IF2 and preventing the misappropriation of this tRNA by the elongation apparatus. The protein is Methionyl-tRNA formyltransferase of Methylobacillus flagellatus (strain ATCC 51484 / DSM 6875 / VKM B-1610 / KT).